A 372-amino-acid chain; its full sequence is Queuine tRNA-ribosyltransferase (372 aa).

The active-site Proton acceptor is the Asp-92. Substrate-binding positions include 92-96 (DSGGY), Asp-146, Gln-188, and Gly-215. The tract at residues 246–252 (GIGTIRE) is RNA binding. Asp-265 serves as the catalytic Nucleophile. The interval 270 to 274 (TRLGR) is RNA binding; important for wobble base 34 recognition. Residues Cys-303, Cys-305, Cys-308, and His-334 each coordinate Zn(2+).

It belongs to the queuine tRNA-ribosyltransferase family. In terms of assembly, homodimer. Within each dimer, one monomer is responsible for RNA recognition and catalysis, while the other monomer binds to the replacement base PreQ1. Zn(2+) serves as cofactor.

The catalysed reaction is 7-aminomethyl-7-carbaguanine + guanosine(34) in tRNA = 7-aminomethyl-7-carbaguanosine(34) in tRNA + guanine. It functions in the pathway tRNA modification; tRNA-queuosine biosynthesis. Functionally, catalyzes the base-exchange of a guanine (G) residue with the queuine precursor 7-aminomethyl-7-deazaguanine (PreQ1) at position 34 (anticodon wobble position) in tRNAs with GU(N) anticodons (tRNA-Asp, -Asn, -His and -Tyr). Catalysis occurs through a double-displacement mechanism. The nucleophile active site attacks the C1' of nucleotide 34 to detach the guanine base from the RNA, forming a covalent enzyme-RNA intermediate. The proton acceptor active site deprotonates the incoming PreQ1, allowing a nucleophilic attack on the C1' of the ribose to form the product. After dissociation, two additional enzymatic reactions on the tRNA convert PreQ1 to queuine (Q), resulting in the hypermodified nucleoside queuosine (7-(((4,5-cis-dihydroxy-2-cyclopenten-1-yl)amino)methyl)-7-deazaguanosine). In Prochlorococcus marinus (strain SARG / CCMP1375 / SS120), this protein is Queuine tRNA-ribosyltransferase.